Reading from the N-terminus, the 141-residue chain is Large ribosomal subunit protein uL11 (141 aa).

This sequence belongs to the universal ribosomal protein uL11 family. Part of the ribosomal stalk of the 50S ribosomal subunit. Interacts with L10 and the large rRNA to form the base of the stalk. L10 forms an elongated spine to which L12 dimers bind in a sequential fashion forming a multimeric L10(L12)X complex. In terms of processing, one or more lysine residues are methylated.

Forms part of the ribosomal stalk which helps the ribosome interact with GTP-bound translation factors. The polypeptide is Large ribosomal subunit protein uL11 (Chlorobium chlorochromatii (strain CaD3)).